A 248-amino-acid chain; its full sequence is Probable transcriptional regulatory protein OCAR_7305/OCA5_c08120 (248 aa).

It belongs to the TACO1 family.

The protein resides in the cytoplasm. This chain is Probable transcriptional regulatory protein OCAR_7305/OCA5_c08120, found in Afipia carboxidovorans (strain ATCC 49405 / DSM 1227 / KCTC 32145 / OM5) (Oligotropha carboxidovorans).